A 127-amino-acid chain; its full sequence is Small ribosomal subunit protein uS11 (127 aa).

The protein belongs to the universal ribosomal protein uS11 family. Part of the 30S ribosomal subunit. Interacts with proteins S7 and S18. Binds to IF-3.

In terms of biological role, located on the platform of the 30S subunit, it bridges several disparate RNA helices of the 16S rRNA. Forms part of the Shine-Dalgarno cleft in the 70S ribosome. This is Small ribosomal subunit protein uS11 from Ehrlichia ruminantium (strain Gardel).